The primary structure comprises 72 residues: UPF0270 protein ETA_31870 (72 aa).

This sequence belongs to the UPF0270 family.

The sequence is that of UPF0270 protein ETA_31870 from Erwinia tasmaniensis (strain DSM 17950 / CFBP 7177 / CIP 109463 / NCPPB 4357 / Et1/99).